A 411-amino-acid chain; its full sequence is D-ribitol-5-phosphate cytidylyltransferase (411 aa).

Belongs to the IspD/TarI cytidylyltransferase family. IspD subfamily. As to quaternary structure, homodimer.

It localises to the cytoplasm. Its subcellular location is the cytosol. It catalyses the reaction D-ribitol 5-phosphate + CTP + H(+) = CDP-L-ribitol + diphosphate. The enzyme catalyses D-ribose 5-phosphate + CTP + H(+) = CDP-D-ribose + diphosphate. It carries out the reaction D-ribulose 5-phosphate + CTP + H(+) = CDP-D-ribulose + diphosphate. It functions in the pathway protein modification; protein glycosylation. Cytidylyltransferase required for protein O-linked mannosylation. Catalyzes the formation of CDP-ribitol nucleotide sugar from D-ribitol 5-phosphate. CDP-ribitol is a substrate of FKTN during the biosynthesis of the phosphorylated O-mannosyl trisaccharide (N-acetylgalactosamine-beta-3-N-acetylglucosamine-beta-4-(phosphate-6-)mannose), a carbohydrate structure present in alpha-dystroglycan (DAG1), which is required for binding laminin G-like domain-containing extracellular proteins with high affinity. Shows activity toward other pentose phosphate sugars and mediates formation of CDP-ribulose or CDP-ribose using CTP and ribulose-5-phosphate or ribose-5-phosphate, respectively. Not involved in dolichol production. The polypeptide is D-ribitol-5-phosphate cytidylyltransferase (crppa) (Xenopus tropicalis (Western clawed frog)).